The sequence spans 939 residues: Isoleucine--tRNA ligase (939 aa).

Residues 58–68 (PYANGDIHIGH) carry the 'HIGH' region motif. E574 contributes to the L-isoleucyl-5'-AMP binding site. The short motif at 615–619 (KMSKS) is the 'KMSKS' region element. K618 serves as a coordination point for ATP. C902, C905, C922, and C925 together coordinate Zn(2+).

The protein belongs to the class-I aminoacyl-tRNA synthetase family. IleS type 1 subfamily. In terms of assembly, monomer. Requires Zn(2+) as cofactor.

The protein resides in the cytoplasm. The catalysed reaction is tRNA(Ile) + L-isoleucine + ATP = L-isoleucyl-tRNA(Ile) + AMP + diphosphate. Its function is as follows. Catalyzes the attachment of isoleucine to tRNA(Ile). As IleRS can inadvertently accommodate and process structurally similar amino acids such as valine, to avoid such errors it has two additional distinct tRNA(Ile)-dependent editing activities. One activity is designated as 'pretransfer' editing and involves the hydrolysis of activated Val-AMP. The other activity is designated 'posttransfer' editing and involves deacylation of mischarged Val-tRNA(Ile). In Aromatoleum aromaticum (strain DSM 19018 / LMG 30748 / EbN1) (Azoarcus sp. (strain EbN1)), this protein is Isoleucine--tRNA ligase.